We begin with the raw amino-acid sequence, 138 residues long: Large ribosomal subunit protein bL17 (138 aa).

The protein belongs to the bacterial ribosomal protein bL17 family. Part of the 50S ribosomal subunit. Contacts protein L32.

This is Large ribosomal subunit protein bL17 from Methylorubrum extorquens (strain PA1) (Methylobacterium extorquens).